The sequence spans 429 residues: Putative pentatricopeptide repeat-containing protein At1g03510 (429 aa).

10 PPR repeats span residues 11 to 45 (KLIS…FALP), 47 to 81 (DAHV…NFLS), 82 to 112 (NPFV…IPQR), 113 to 147 (NAVV…PNES), 148 to 180 (SFNA…RFKP), 181 to 215 (NLIT…LIEP), 216 to 246 (HPQL…MEDR), 247 to 281 (DVVA…KVTP), 282 to 312 (DDIA…MQGD), and 318 to 348 (SKDH…MPEK). Positions 353–428 (TWGALLGACR…SPGSSWCLFK (76 aa)) are type E motif.

It belongs to the PPR family. PCMP-E subfamily.

This chain is Putative pentatricopeptide repeat-containing protein At1g03510 (PCMP-E3), found in Arabidopsis thaliana (Mouse-ear cress).